The following is a 427-amino-acid chain: Neuronal pentraxin-2 (427 aa).

The signal sequence occupies residues 1 to 17 (MLALLAAGVAFAVVVLA). 2 N-linked (GlcNAc...) asparagine glycosylation sites follow: N144 and N185. In terms of domain architecture, Pentraxin (PTX) spans 219 to 420 (DAFKVSLPFR…GASKWPVETC (202 aa)). C249 and C309 are disulfide-bonded. N273, E351, Q352, D353, and Q363 together coordinate Ca(2+). N389 carries an N-linked (GlcNAc...) asparagine glycan.

As to quaternary structure, homooligomer or heterooligomer (probably pentamer) with neuronal pentraxin receptor (NPTXR). It depends on Ca(2+) as a cofactor. In terms of tissue distribution, testis specific.

The protein localises to the cytoplasmic vesicle. The protein resides in the secretory vesicle. It localises to the acrosome lumen. In terms of biological role, may be involved in binding, concentrating, and sorting soluble glycoproteins or glycolipids that are destined for the acrosome. The sequence is that of Neuronal pentraxin-2 (NPTX2) from Cavia porcellus (Guinea pig).